The chain runs to 489 residues: Inactive receptor-like serine/threonine-protein kinase At2g40270 (489 aa).

The signal sequence occupies residues 1-23 (MLFKMRSFVAFVLLLSWFGSCCS). Topologically, residues 24–139 (LKDQAVDFLK…PRNSHSSVPL (116 aa)) are extracellular. Positions 67-130 (KDLPSRKDRK…SAPLANSPIP (64 aa)) are disordered. Residues 81 to 90 (AATTTPSSSP) are compositionally biased toward low complexity. Residues 99 to 116 (TKASTVSEPQKRSSTQDV) show a composition bias toward polar residues. Residues 117–130 (SPSPSAPLANSPIP) show a composition bias toward low complexity. A helical transmembrane segment spans residues 140 to 160 (VVGCVGGAFFLLLVATGLYFF). Topologically, residues 161–489 (TSKAGKTVNP…WAELEVLSTA (329 aa)) are cytoplasmic. The Protein kinase domain occupies 200-460 (EDFSNVIGSC…PTMQEVTGWL (261 aa)).

The protein belongs to the protein kinase superfamily. Ser/Thr protein kinase family.

Its subcellular location is the cell membrane. This Arabidopsis thaliana (Mouse-ear cress) protein is Inactive receptor-like serine/threonine-protein kinase At2g40270.